The primary structure comprises 414 residues: Carboxynorspermidine synthase (414 aa).

Belongs to the saccharopine dehydrogenase family. Carboxynorspermidine synthase subfamily.

It catalyses the reaction carboxynorspermidine + NADP(+) + H2O = L-aspartate 4-semialdehyde + propane-1,3-diamine + NADPH + H(+). The catalysed reaction is carboxyspermidine + NADP(+) + H2O = L-aspartate 4-semialdehyde + putrescine + NADPH + H(+). Its function is as follows. Involved in norspermidine biosynthesis. Catalyzes the synthesis of carboxynorspermidine from L-aspartate 4-semialdehyde and 1,3-diaminopropane. Is also active with putrescine as a substrate. Essential for biofilm formation. The polypeptide is Carboxynorspermidine synthase (Vibrio cholerae serotype O1 (strain ATCC 39315 / El Tor Inaba N16961)).